The sequence spans 232 residues: Ribose-5-phosphate isomerase A (232 aa).

Residues T28–T31, D83–D86, and K96–G99 each bind substrate. The active-site Proton acceptor is the E105. K123 contributes to the substrate binding site.

Belongs to the ribose 5-phosphate isomerase family. In terms of assembly, homodimer.

It catalyses the reaction aldehydo-D-ribose 5-phosphate = D-ribulose 5-phosphate. It participates in carbohydrate degradation; pentose phosphate pathway; D-ribose 5-phosphate from D-ribulose 5-phosphate (non-oxidative stage): step 1/1. Functionally, catalyzes the reversible conversion of ribose-5-phosphate to ribulose 5-phosphate. The polypeptide is Ribose-5-phosphate isomerase A (Allorhizobium ampelinum (strain ATCC BAA-846 / DSM 112012 / S4) (Agrobacterium vitis (strain S4))).